The chain runs to 711 residues: 1,4-alpha-glucan branching enzyme GlgB (711 aa).

Residue Asp392 is the Nucleophile of the active site. The Proton donor role is filled by Glu443.

The protein belongs to the glycosyl hydrolase 13 family. GlgB subfamily. In terms of assembly, monomer.

The enzyme catalyses Transfers a segment of a (1-&gt;4)-alpha-D-glucan chain to a primary hydroxy group in a similar glucan chain.. The protein operates within glycan biosynthesis; glycogen biosynthesis. Catalyzes the formation of the alpha-1,6-glucosidic linkages in glycogen by scission of a 1,4-alpha-linked oligosaccharide from growing alpha-1,4-glucan chains and the subsequent attachment of the oligosaccharide to the alpha-1,6 position. The sequence is that of 1,4-alpha-glucan branching enzyme GlgB from Corynebacterium jeikeium (strain K411).